The primary structure comprises 503 residues: MVSAAASAGRLGSALPFLLVLLDLQYQGAECGINAEVEKQLEMGKKLLAAGQLADALSHFHAAIEGDSDNYIAYYRRATVYLAMGKSKAAIRDLSKVVELKQDFTSRLQRGHLLLKQGKFDEAEDDFKNVLKSNPSNNEEKEAQTQLTKSDELQRLYSQALSAYRQEDYEAAIPLLDEILAVCVWDAELRELRAECYIKEGEPSKAISDLKAAAKLKSDNTEAFYKISRIYYQLGDHELSLSEVRECLKLDQDHKQCFSLYKQVKKLNKQIESAEEFIREGRYEDAISKYDSVMKTEPDVPVYATRAKERICHCLSKNQQATEAITVCTQVLQLEPTNVNALKDRAEAYLLEDLYEEAIKDYETAQANSENDQQIREGLERAQRMLKQSQKRDYYKILGVKRNARKQEIIKAYRKLASQWHPDNFQSEEEKKKAEKKFIDIAAAKEVLTDPEMRRKFDAGEDPLDAESQQGGGNPFHRNWNTWQGFNPFGSGGGPFTFKFHFS.

Positions 1-31 (MVSAAASAGRLGSALPFLLVLLDLQYQGAEC) are cleaved as a signal peptide. TPR repeat units follow at residues 37 to 70 (VEKQ…DSDN), 71 to 104 (YIAY…KQDF), 105 to 137 (TSRL…NPSN), 153 to 186 (LQRL…CVWD), 187 to 220 (AELR…KSDN), 221 to 254 (TEAF…DQDH), 267 to 300 (LNKQ…EPDV), 305 to 338 (TRAK…EPTN), and 339 to 372 (VNAL…SEND). Cys-247 and Cys-257 are disulfide-bonded. Cysteines 312 and 328 form a disulfide. The segment at 374–392 (QIREGLERAQRMLKQSQKR) is flexible linker. The region spanning 393 to 461 (DYYKILGVKR…EMRRKFDAGE (69 aa)) is the J domain.

The protein localises to the endoplasmic reticulum. Functionally, may be involved in the unfolded protein response (UPR) during ER stress. The polypeptide is DnaJ homolog subfamily C member 3 (DNAJC3) (Gallus gallus (Chicken)).